A 630-amino-acid chain; its full sequence is tRNA uridine 5-carboxymethylaminomethyl modification enzyme MnmG (630 aa).

Residues 14 to 19 (GAGHAG), valine 126, and serine 181 each bind FAD. An NAD(+)-binding site is contributed by 273–287 (GPRYCPSIEDKVVRF). Glutamine 370 provides a ligand contact to FAD.

The protein belongs to the MnmG family. In terms of assembly, homodimer. Heterotetramer of two MnmE and two MnmG subunits. The cofactor is FAD.

Its subcellular location is the cytoplasm. Its function is as follows. NAD-binding protein involved in the addition of a carboxymethylaminomethyl (cmnm) group at the wobble position (U34) of certain tRNAs, forming tRNA-cmnm(5)s(2)U34. This chain is tRNA uridine 5-carboxymethylaminomethyl modification enzyme MnmG, found in Alkaliphilus metalliredigens (strain QYMF).